A 496-amino-acid chain; its full sequence is Tripartite motif-containing protein 30A (496 aa).

The segment at 15-59 adopts an RING-type zinc-finger fold; the sequence is CPICLELLKEPVSADCNHSFCRACITLNYESNRNTDGKGNCPVCR. Residues 91 to 132 form a B box-type zinc finger; the sequence is QKVNICAQHGEKLRLFCRKDMMVICWLCERSQEHRGHQTALI. Residues cysteine 96, histidine 99, cysteine 118, and histidine 124 each coordinate Zn(2+). Positions 173–239 form a coiled coil; it reads NQIQINVENV…RDLISDVEHH (67 aa). The tract at residues 205–210 is highly hydrophilic; that stretch reads KKEKKE. The Nuclear localization signal signature appears at 268–276; sequence TVPQKRKRT. The 216-residue stretch at 281 to 496 folds into the B30.2/SPRY domain; the sequence is DLKGMLQVYQ…EPMTICGPPS (216 aa).

In terms of assembly, homomultimer. Interacts with NR2C2/TAK1, TAB2 and TAB3. Does not interact with NLRP3, NLRC4 or TAB1. As to expression, highly expressed in spleen and lymph nodes (at protein level).

It localises to the cytoplasm. Its subcellular location is the nucleus. Trans-acting factor that regulates gene expression of interleukin 2 receptor alpha chain. May affect IL2R-alpha expression through cis-acting negative regulatory elements or through competition with proteins that bind to enhancer or activator sequences. Negatively regulates Toll-like receptor (TLR)-mediated activation of NFKB by promoting degradation of TAB2 and TAB3 and preventing TRAF6 autoubiquitination. Negatively regulates production of reactive oxygen species (ROS) which inhibits activation of the NLRP3 inflammasome complex. This, in turn, regulates activation of CASP1 and subsequent cleavage of IL1B and IL18. No activity detected against a range of retroviruses including a number of lentiviruses, gammaretroviruses and betaretroviruses. The chain is Tripartite motif-containing protein 30A (Trim30a) from Mus musculus (Mouse).